The following is a 333-amino-acid chain: Taste receptor type 2 member 123 (333 aa).

Topologically, residues 1 to 14 (MFSQKTNYSHLFTF) are extracellular. Residues 15-37 (SIIFYVEIVTGILGNGFIALVNI) form a helical membrane-spanning segment. The Cytoplasmic portion of the chain corresponds to 38–57 (MDWLKRRRISTADQILTALA). The helical transmembrane segment at 58–77 (LTRLIYVWSVLICILLLFLC) threads the bilayer. At 78–91 (PHLSMRPEMFTAIG) the chain is on the extracellular side. The helical transmembrane segment at 92-114 (VIWVVDNHFSIWLATCLGVFYFL) threads the bilayer. The Cytoplasmic portion of the chain corresponds to 115–133 (KIASFSNSLFLYLKWRVKK). The helical transmembrane segment at 134–156 (VVLMIILISLIFLMLNISSLGMY) threads the bilayer. Residues 157-204 (DHFSIDVYEGNMSYNLVDSTHFPRIFLFTNSSKVFLIANSSHVFLPIN) are Extracellular-facing. Residues Asn167, Asn186, and Asn195 are each glycosylated (N-linked (GlcNAc...) asparagine). Residues 205 to 227 (SLFMLIPFTVSLVAFFVLFLSLW) traverse the membrane as a helical segment. At 228-250 (KHHKKMQVNAKGPRDASTMAHTK) the chain is on the cytoplasmic side. The helical transmembrane segment at 251 to 273 (ALQIGFSFLLLYAIYLLFIITGI) threads the bilayer. Residues 274–282 (LNLDLMRCI) lie on the Extracellular side of the membrane. The chain crosses the membrane as a helical span at residues 283-305 (VILLFDHISGAVFSISHSFVLIL). At 306–333 (GNSKLRQATLSVLPCLRCRSKDMDTVVF) the chain is on the cytoplasmic side.

Belongs to the G-protein coupled receptor T2R family. As to expression, expressed in subsets of taste receptor cells of the tongue and palate epithelium and exclusively in gustducin-positive cells. Expressed in the antrum and fundus (part of the stomach), duodenum and in gastric endocrine cells.

The protein localises to the membrane. Gustducin-coupled receptor implicated in the perception of bitter compounds in the oral cavity and the gastrointestinal tract. Signals through PLCB2 and the calcium-regulated cation channel TRPM5. In Rattus norvegicus (Rat), this protein is Taste receptor type 2 member 123 (Tas2r123).